The chain runs to 389 residues: snRNA-activating protein complex subunit 1 (389 aa).

The segment covering Met-1 to Gly-15 has biased composition (low complexity). 3 disordered regions span residues Met-1–Ile-22, Trp-245–Glu-276, and Ser-290–Cys-389. The tract at residues Val-20 to Val-187 is SNAPC3-binding. An SNAPC4-binding region spans residues Pro-183–Lys-287. The segment covering Trp-245–Glu-262 has biased composition (basic and acidic residues). Phosphoserine is present on residues Ser-308 and Ser-309.

As to quaternary structure, part of the SNAPc complex composed of 5 subunits: SNAPC1, SNAPC2, SNAPC3, SNAPC4 and SNAPC5. SNAPC1 interacts with SNAPC3, SNAPC4 and TBP.

It is found in the nucleus. In terms of biological role, part of the SNAPc complex required for the transcription of both RNA polymerase II and III small-nuclear RNA genes. Binds to the proximal sequence element (PSE), a non-TATA-box basal promoter element common to these 2 types of genes. Recruits TBP and BRF2 to the U6 snRNA TATA box. The sequence is that of snRNA-activating protein complex subunit 1 (Snapc1) from Mus musculus (Mouse).